Here is a 415-residue protein sequence, read N- to C-terminus: MPAILSRVAPRTFNLVGSRLMASAARLETVPREEIHKEYDRKKTFYHRDLEIQLAGPTQLKTKPLDPTKLKFGHTYADYMMTCDWDAERGWHHPKIEPIGELKIHPGAKVLHYASELFEGMKAYRGIDNKIRMFRPEMNMARMKRTALRAALPDFDSEEMINVLTELLRLDQEWVPNSDVCSLYLRPTLIGTDPTLGVGCATEAKMFVITGPVGAYYSTGFQPVSLLADSRFIRAFPGGVGAYKMGCNYAPTIWVGKEAASKNCQQVLWLYGENEDLTEVGTMNIFLFWKNEEGDMELITPPLHRGLILPGVTRDSLLELGREWGEYKVTERTLNMEEVKKALSEKRLYEMFGSGTACVVSPVGKILYHNKVTDEYEELHIPTMSSKFGVMQKFYNTINDIQYGRIIKDGWMRDI.

Lys244 carries the post-translational modification N6-(pyridoxal phosphate)lysine.

Belongs to the class-IV pyridoxal-phosphate-dependent aminotransferase family. It depends on pyridoxal 5'-phosphate as a cofactor.

It is found in the cytoplasm. The catalysed reaction is L-leucine + 2-oxoglutarate = 4-methyl-2-oxopentanoate + L-glutamate. The enzyme catalyses L-isoleucine + 2-oxoglutarate = (S)-3-methyl-2-oxopentanoate + L-glutamate. It carries out the reaction L-valine + 2-oxoglutarate = 3-methyl-2-oxobutanoate + L-glutamate. Functionally, catalyzes the first reaction in the catabolism of the essential branched chain amino acids leucine, isoleucine, and valine. The chain is Branched-chain-amino-acid aminotransferase, cytosolic (bcat-1) from Caenorhabditis elegans.